The chain runs to 207 residues: Large ribosomal subunit protein uL4 (207 aa).

Residues 49-78 form a disordered region; that stretch reads HAVKNRSAVSGGGRKPWRQKGTGRARQGSI.

Belongs to the universal ribosomal protein uL4 family. In terms of assembly, part of the 50S ribosomal subunit.

One of the primary rRNA binding proteins, this protein initially binds near the 5'-end of the 23S rRNA. It is important during the early stages of 50S assembly. It makes multiple contacts with different domains of the 23S rRNA in the assembled 50S subunit and ribosome. Functionally, forms part of the polypeptide exit tunnel. The polypeptide is Large ribosomal subunit protein uL4 (Streptococcus gordonii (strain Challis / ATCC 35105 / BCRC 15272 / CH1 / DL1 / V288)).